Consider the following 350-residue polypeptide: Ion-translocating oxidoreductase complex subunit D (350 aa).

A run of 4 helical transmembrane segments spans residues 36–56 (FYFF…IALL), 68–88 (PIIS…IGVS), 89–109 (IPSI…IVIV), and 120–140 (IFNP…VQMT). Thr-185 is modified (FMN phosphoryl threonine). Helical transmembrane passes span 212-232 (GFGV…LAML), 239-259 (WQIS…GYLL), 265-285 (IGPL…FIAT), 291-311 (ATSV…VYVI), and 315-335 (GGYP…APFI).

This sequence belongs to the NqrB/RnfD family. The complex is composed of six subunits: RnfA, RnfB, RnfC, RnfD, RnfE and RnfG. FMN serves as cofactor.

Its subcellular location is the cell inner membrane. In terms of biological role, part of a membrane-bound complex that couples electron transfer with translocation of ions across the membrane. The polypeptide is Ion-translocating oxidoreductase complex subunit D (Shewanella piezotolerans (strain WP3 / JCM 13877)).